The sequence spans 754 residues: Exocyst complex component EXO84A (754 aa).

2 disordered regions span residues 514–540 and 734–754; these read RILP…EQRE and GHGE…YTSN. The span at 518-527 shows a compositional bias: polar residues; the sequence is QGTSQSTPRR. Over residues 528–540 the composition is skewed to basic and acidic residues; the sequence is GSSDRQNRPEQRE. The segment covering 741–754 has biased composition (polar residues); sequence TSPSVSSAKSYTSN.

It belongs to the EXO84 family. The exocyst complex is composed of SEC3, SEC5, SEC6, SEC8, SEC10, EXO70A1 and EXO84.

Component of the exocyst complex involved in the docking of exocytic vesicles with fusion sites on the plasma membrane during regulated or polarized secretion. Involved in polarized cell growth and organ morphogenesis. During cytokinesis, involved in cell plate initiation, cell plate maturation and formation of new primary cell wall. This chain is Exocyst complex component EXO84A (EXO84A), found in Arabidopsis thaliana (Mouse-ear cress).